We begin with the raw amino-acid sequence, 322 residues long: Nodulation protein D 1 (322 aa).

The region spanning 6-63 (LDLNLLVALDALMTERKLTAAARSINLSQPAMSAAITRLRTYFRDELFTMNGRELVPT) is the HTH lysR-type domain. Residues 23–42 (LTAAARSINLSQPAMSAAIT) constitute a DNA-binding region (H-T-H motif).

It belongs to the LysR transcriptional regulatory family.

In terms of biological role, regulates the expression of the nod abcFE genes which encode other nodulation proteins. NodD is also a negative regulator of its own expression. Binds flavonoids as inducers. This Sinorhizobium fredii (strain NBRC 101917 / NGR234) protein is Nodulation protein D 1 (nodD1).